A 345-amino-acid chain; its full sequence is MAGIVGYGAYIPKYRIKVEEIARVWNKDPESIKKGLLVYEKAVPSLDEDTATIAVEAARNALKRAEIDPKDIGAVYVGSESHPYAVKPTATIVAEAIDATPDLTAADLEFACKAGTAGIQMCMGLVESGLIKYGLAIGADTAQGAPGDALEYTAAAGGAAYIIGKSNVIAEFNGTYSYTTDTPDFWRREGKPYPRHGGRFTGEPAYFRHVINAAKGLMEKMGTKPEDYDYCVFHQPNGKFYIRVAKILGFKEEQYKIGLLTPYIGNTYSGAVPLGLSNVLDNCEGGERILAVSYGSGAGSDAFDITVTDRINKVKDKAPKTAYYLERKEYIDYAIYAKFRKKIKM.

Residue Asp28 coordinates (3S)-3-hydroxy-3-methylglutaryl-CoA. Residue Glu80 is the Proton donor/acceptor of the active site. The (3S)-3-hydroxy-3-methylglutaryl-CoA site is built by Cys112 and Thr153. Cys112 (acyl-thioester intermediate) is an active-site residue. Arg199 is a binding site for CoA. (3S)-3-hydroxy-3-methylglutaryl-CoA is bound by residues Thr201 and His234. The active-site Proton donor/acceptor is the His234. Lys239 contributes to the CoA binding site. 3 residues coordinate (3S)-3-hydroxy-3-methylglutaryl-CoA: Arg243, Asn266, and Ser296.

The protein belongs to the thiolase-like superfamily. Archaeal HMG-CoA synthase family. In terms of assembly, interacts with acetoacetyl-CoA thiolase that catalyzes the precedent step in the pathway and with a DUF35 protein. The acetoacetyl-CoA thiolase/HMG-CoA synthase complex channels the intermediate via a fused CoA-binding site, which allows for efficient coupling of the endergonic thiolase reaction with the exergonic HMGCS reaction.

It catalyses the reaction acetoacetyl-CoA + acetyl-CoA + H2O = (3S)-3-hydroxy-3-methylglutaryl-CoA + CoA + H(+). The protein operates within metabolic intermediate biosynthesis; (R)-mevalonate biosynthesis; (R)-mevalonate from acetyl-CoA: step 2/3. Its function is as follows. Catalyzes the condensation of acetyl-CoA with acetoacetyl-CoA to form 3-hydroxy-3-methylglutaryl-CoA (HMG-CoA). Functions in the mevalonate (MVA) pathway leading to isopentenyl diphosphate (IPP), a key precursor for the biosynthesis of isoprenoid compounds that are building blocks of archaeal membrane lipids. This Methanocaldococcus jannaschii (strain ATCC 43067 / DSM 2661 / JAL-1 / JCM 10045 / NBRC 100440) (Methanococcus jannaschii) protein is Hydroxymethylglutaryl-CoA synthase.